Reading from the N-terminus, the 152-residue chain is Deoxyuridine 5'-triphosphate nucleotidohydrolase (152 aa).

Residues 71–73 (RSG), asparagine 84, 88–90 (LID), and methionine 98 each bind substrate.

Belongs to the dUTPase family. The cofactor is Mg(2+).

It catalyses the reaction dUTP + H2O = dUMP + diphosphate + H(+). The protein operates within pyrimidine metabolism; dUMP biosynthesis; dUMP from dCTP (dUTP route): step 2/2. This enzyme is involved in nucleotide metabolism: it produces dUMP, the immediate precursor of thymidine nucleotides and it decreases the intracellular concentration of dUTP so that uracil cannot be incorporated into DNA. This is Deoxyuridine 5'-triphosphate nucleotidohydrolase from Shewanella loihica (strain ATCC BAA-1088 / PV-4).